A 385-amino-acid polypeptide reads, in one-letter code: Transcription termination factor 2, mitochondrial (385 aa).

A mitochondrion-targeting transit peptide spans 1–35 (MSWRLLTGYQLCRLRLFRKPQPALKIRPSSVCVTY).

This sequence belongs to the mTERF family. As to quaternary structure, monomer.

The protein localises to the mitochondrion matrix. Its subcellular location is the mitochondrion nucleoid. Binds mitochondrial DNA and plays a role in the regulation of transcription of mitochondrial mRNA and rRNA species. The sequence is that of Transcription termination factor 2, mitochondrial (Mterf2) from Rattus norvegicus (Rat).